The primary structure comprises 119 residues: Large ribosomal subunit protein bL20 (119 aa).

It belongs to the bacterial ribosomal protein bL20 family.

Binds directly to 23S ribosomal RNA and is necessary for the in vitro assembly process of the 50S ribosomal subunit. It is not involved in the protein synthesizing functions of that subunit. The chain is Large ribosomal subunit protein bL20 from Clostridium acetobutylicum (strain ATCC 824 / DSM 792 / JCM 1419 / IAM 19013 / LMG 5710 / NBRC 13948 / NRRL B-527 / VKM B-1787 / 2291 / W).